The chain runs to 152 residues: Large-conductance mechanosensitive channel (152 aa).

3 helical membrane passes run 21-41 (IDLA…DSLV), 44-64 (VVMP…NKFL), and 92-112 (GNFI…FWMV).

It belongs to the MscL family. As to quaternary structure, homopentamer.

It is found in the cell inner membrane. Its function is as follows. Channel that opens in response to stretch forces in the membrane lipid bilayer. May participate in the regulation of osmotic pressure changes within the cell. The chain is Large-conductance mechanosensitive channel from Bordetella bronchiseptica (strain ATCC BAA-588 / NCTC 13252 / RB50) (Alcaligenes bronchisepticus).